Reading from the N-terminus, the 543-residue chain is CTP synthase (543 aa).

The tract at residues 1–265 (MTRFVFITGG…DTEVLRHFGL (265 aa)) is amidoligase domain. Ser-13 contributes to the CTP binding site. Residue Ser-13 participates in UTP binding. Residue 14–19 (SLGKGI) coordinates ATP. L-glutamine is bound at residue Tyr-54. Asp-71 serves as a coordination point for ATP. Mg(2+)-binding residues include Asp-71 and Glu-139. Residues 146 to 148 (DIE), 186 to 191 (KTKPTQ), and Lys-222 contribute to the CTP site. UTP contacts are provided by residues 186-191 (KTKPTQ) and Lys-222. Positions 291–542 (RIAVVGKYTA…VGAAVKKMRL (252 aa)) constitute a Glutamine amidotransferase type-1 domain. Gly-354 is a binding site for L-glutamine. Residue Cys-381 is the Nucleophile; for glutamine hydrolysis of the active site. Residues 382–385 (FGMQ), Glu-405, and Arg-470 contribute to the L-glutamine site. Active-site residues include His-515 and Glu-517.

It belongs to the CTP synthase family. In terms of assembly, homotetramer.

The enzyme catalyses UTP + L-glutamine + ATP + H2O = CTP + L-glutamate + ADP + phosphate + 2 H(+). It carries out the reaction L-glutamine + H2O = L-glutamate + NH4(+). The catalysed reaction is UTP + NH4(+) + ATP = CTP + ADP + phosphate + 2 H(+). The protein operates within pyrimidine metabolism; CTP biosynthesis via de novo pathway; CTP from UDP: step 2/2. Allosterically activated by GTP, when glutamine is the substrate; GTP has no effect on the reaction when ammonia is the substrate. The allosteric effector GTP functions by stabilizing the protein conformation that binds the tetrahedral intermediate(s) formed during glutamine hydrolysis. Inhibited by the product CTP, via allosteric rather than competitive inhibition. Functionally, catalyzes the ATP-dependent amination of UTP to CTP with either L-glutamine or ammonia as the source of nitrogen. Regulates intracellular CTP levels through interactions with the four ribonucleotide triphosphates. This chain is CTP synthase, found in Gluconacetobacter diazotrophicus (strain ATCC 49037 / DSM 5601 / CCUG 37298 / CIP 103539 / LMG 7603 / PAl5).